A 1054-amino-acid polypeptide reads, in one-letter code: Translation initiation factor IF-2 (1054 aa).

Disordered stretches follow at residues 48–390 and 409–458; these read RSKL…LDLD and LARP…GTEP. Residues 65-76 show a composition bias toward pro residues; the sequence is KPPSESLPPEPP. The segment covering 160 to 169 has biased composition (polar residues); sequence SEATQKPETV. The segment covering 179 to 193 has biased composition (low complexity); sequence SESAAAKASGSEPSP. Pro residues-rich tracts occupy residues 221-235 and 304-316; these read PQKA…PSEA and PTRP…PPEP. Basic residues predominate over residues 365–378; sequence RAARVQAKRKRSRR. Positions 421-437 are enriched in low complexity; that stretch reads PPAATAAPPARPRPAAR. Residues 545–718 form the tr-type G domain; it reads SRPPVVTIMG…LLVADVAELQ (174 aa). A G1 region spans residues 554–561; it reads GHVDHGKT. A GTP-binding site is contributed by 554 to 561; sequence GHVDHGKT. A G2 region spans residues 579–583; it reads GITQR. Positions 604–607 are G3; that stretch reads DTPG. GTP-binding positions include 604–608 and 658–661; these read DTPGH and NKID. A G4 region spans residues 658–661; the sequence is NKID. The tract at residues 694–696 is G5; the sequence is SAL.

The protein belongs to the TRAFAC class translation factor GTPase superfamily. Classic translation factor GTPase family. IF-2 subfamily.

The protein localises to the cytoplasm. Functionally, one of the essential components for the initiation of protein synthesis. Protects formylmethionyl-tRNA from spontaneous hydrolysis and promotes its binding to the 30S ribosomal subunits. Also involved in the hydrolysis of GTP during the formation of the 70S ribosomal complex. The chain is Translation initiation factor IF-2 from Synechococcus sp. (strain JA-2-3B'a(2-13)) (Cyanobacteria bacterium Yellowstone B-Prime).